The chain runs to 392 residues: Dual-specificity RNA methyltransferase RlmN (392 aa).

Glu116 acts as the Proton acceptor in catalysis. The Radical SAM core domain maps to 122 to 364; it reads EEGRGTLCVS…SPIRTPRGED (243 aa). A disulfide bond links Cys129 and Cys369. The [4Fe-4S] cluster site is built by Cys136, Cys140, and Cys143. Residues 195-196, Ser227, 249-251, and Asn326 contribute to the S-adenosyl-L-methionine site; these read GE and SFH. Residue Cys369 is the S-methylcysteine intermediate of the active site.

Belongs to the radical SAM superfamily. RlmN family. The cofactor is [4Fe-4S] cluster.

Its subcellular location is the cytoplasm. The enzyme catalyses adenosine(2503) in 23S rRNA + 2 reduced [2Fe-2S]-[ferredoxin] + 2 S-adenosyl-L-methionine = 2-methyladenosine(2503) in 23S rRNA + 5'-deoxyadenosine + L-methionine + 2 oxidized [2Fe-2S]-[ferredoxin] + S-adenosyl-L-homocysteine. The catalysed reaction is adenosine(37) in tRNA + 2 reduced [2Fe-2S]-[ferredoxin] + 2 S-adenosyl-L-methionine = 2-methyladenosine(37) in tRNA + 5'-deoxyadenosine + L-methionine + 2 oxidized [2Fe-2S]-[ferredoxin] + S-adenosyl-L-homocysteine. Specifically methylates position 2 of adenine 2503 in 23S rRNA and position 2 of adenine 37 in tRNAs. m2A2503 modification seems to play a crucial role in the proofreading step occurring at the peptidyl transferase center and thus would serve to optimize ribosomal fidelity. In Cereibacter sphaeroides (strain ATCC 17029 / ATH 2.4.9) (Rhodobacter sphaeroides), this protein is Dual-specificity RNA methyltransferase RlmN.